Reading from the N-terminus, the 440-residue chain is Tripartite motif-containing protein 14 (440 aa).

The B box-type zinc finger occupies 17-59; the sequence is AYGWRCPEHSERPAELFCRRCGRCVCALCPVLGAHRGHPVGLA. Zn(2+) contacts are provided by Cys22, His25, Cys45, and His51. Residues 247 to 440 form the B30.2/SPRY domain; that stretch reads ALLKTSPSPE…EGPISIPRLP (194 aa).

It belongs to the TRIM/RBCC family. In terms of assembly, interacts with MAVS. Interacts with WRNIP1 and PPP6C; these interactions positively regulate the RIG-I signaling pathway. Interacts with CGAS; this interaction stabilizes CGAS and promotes type I interferon production. Interacts with USP14; this interaction mediates the cleavage of 'Lys-48'-linked ubiquitination of CGAS. Interacts with TBK1. Interacts with SPI1. Interacts with KDM4D and USP14. Ubiquitinated. Undergoes 'Lys-63'-linked polyubiquitination; this modification allows IKBKG/NEMO recruitment to MAVS. Undergoes 'Lys-48'-linked polyubiquitination by RNF125; this modification mediates its degradation via the ubiquitin-proteasome pathway. As to expression, expressed with high level in spleen, thymus, liver and testis. Expressed with low level in the brain, kidney, and skeletal muscle. Expressed in various differentiation stages of B-lymphocytes.

Its subcellular location is the mitochondrion outer membrane. The protein resides in the cytoplasmic vesicle. It localises to the phagosome. Its function is as follows. Plays a role in the innate immune defense against viruses. Facilitates the type I IFN response by interacting with MAVS at the outer mitochondria membrane and thereby recruiting NF-kappa-B essential modulator IKBKG/NEMO to the MAVS signalosome, leading to the activation of both the IFN regulatory factor 3/IRF3 and NF-kappa-B pathways. Positively regulates the CGAS-induced type I interferon signaling pathway by stabilizing CGAS and inhibiting its autophagic degradation. Inhibits the transcriptional activity of SPI1 in a dose-dependent manner. Also inhibits OPTN-mediated selective autophagic degradation of KDM4D and thereby negatively regulates H3K9me2 and H3K9me3. Mechanistically, recruits USP14 to remove the 'Lys-63'-linked ubiquitination of KDM4D, preventing its recognition by OPTN and subsequent degradation. Functionally, plays an essential role in the innate immune defense against viruses and bacteria. Facilitates the type I IFN response by interacting with MAVS at the outer mitochondria membrane and thereby recruiting NF-kappa-B essential modulator IKBKG/NEMO to the MAVS signalosome, leading to the activation of both the IFN regulatory factor 3/IRF3 and NF-kappa-B pathways. Positively regulates the CGAS-induced type I interferon signaling pathway by stabilizing CGAS and inhibiting its autophagic degradation. Acts as a scaffold between TBK1 and STAT3 to promote phosphorylation of STAT3 and resolve interferon-stimulated gene (ISG) expression. Inhibits the transcriptional activity of SPI1 in a dose-dependent manner. The polypeptide is Tripartite motif-containing protein 14 (Trim14) (Mus musculus (Mouse)).